We begin with the raw amino-acid sequence, 772 residues long: Metabotropic glutamate receptor-like protein G (772 aa).

The first 23 residues, 1–23 (MKKIIFLVLFLIFIFKDIKSSYG), serve as a signal peptide directing secretion. The Extracellular segment spans residues 24–391 (VDLVNFKMIT…TQVKFSPSIQ (368 aa)). 6 N-linked (GlcNAc...) asparagine glycosylation sites follow: Asn-73, Asn-126, Asn-262, Asn-313, Asn-343, and Asn-378. The helical transmembrane segment at 392 to 412 (IGVSIVSGVLIAIVLLSMVGV) threads the bilayer. The Cytoplasmic segment spans residues 413–426 (YKYRASSSIRSASP). A helical transmembrane segment spans residues 427-447 (IFLIFILFGALIVFGGIILWV). The Extracellular portion of the chain corresponds to 448-463 (SELNDHVCNGRLWMVT). A helical membrane pass occupies residues 464-484 (LGFSTLIGSLVVKNFRIWLIF). The Cytoplasmic portion of the chain corresponds to 485-500 (DNPELKTVKITNYQLY). The helical transmembrane segment at 501 to 521 (PWVACCLVINIILMSILTSLG) threads the bilayer. Over 522–551 (DLREVDATGIDSLGKYEFLKICKMNNSGAS) the chain is Extracellular. Asn-546 is a glycosylation site (N-linked (GlcNAc...) asparagine). A helical membrane pass occupies residues 552–572 (VLYTILAYFGALLLTGVFVSW). Residues 573 to 586 (KIRIVDIEEFNESR) are Cytoplasmic-facing. Residues 587 to 607 (AIAHTLYAISFCLFVIVPLMI) form a helical membrane-spanning segment. Residues 608 to 616 (SPLEKQSET) are Extracellular-facing. The helical transmembrane segment at 617-637 (IILSVAGLFITTAAVLIIFLP) threads the bilayer. Over 638 to 772 (KFYRVYEYGE…QIEPDEKNQD (135 aa)) the chain is Cytoplasmic. The tract at residues 664–772 (TARAESHKSS…QIEPDEKNQD (109 aa)) is disordered. A compositionally biased stretch (acidic residues) spans 718 to 728 (FTEESVSEIDE). The segment covering 740–753 (PEINQSEQQNSEIE) has biased composition (low complexity). Residues 754-763 (QPPPPPPPQQ) are compositionally biased toward pro residues.

The protein in the N-terminal section; belongs to the BMP lipoprotein family. This sequence in the C-terminal section; belongs to the G-protein coupled receptor 3 family. GABA-B receptor subfamily.

The protein localises to the membrane. The sequence is that of Metabotropic glutamate receptor-like protein G (grlG) from Dictyostelium discoideum (Social amoeba).